The sequence spans 476 residues: Aspartyl/glutamyl-tRNA(Asn/Gln) amidotransferase subunit B 1 (476 aa).

This sequence belongs to the GatB/GatE family. GatB subfamily. As to quaternary structure, heterotrimer of A, B and C subunits.

The enzyme catalyses L-glutamyl-tRNA(Gln) + L-glutamine + ATP + H2O = L-glutaminyl-tRNA(Gln) + L-glutamate + ADP + phosphate + H(+). The catalysed reaction is L-aspartyl-tRNA(Asn) + L-glutamine + ATP + H2O = L-asparaginyl-tRNA(Asn) + L-glutamate + ADP + phosphate + 2 H(+). Allows the formation of correctly charged Asn-tRNA(Asn) or Gln-tRNA(Gln) through the transamidation of misacylated Asp-tRNA(Asn) or Glu-tRNA(Gln) in organisms which lack either or both of asparaginyl-tRNA or glutaminyl-tRNA synthetases. The reaction takes place in the presence of glutamine and ATP through an activated phospho-Asp-tRNA(Asn) or phospho-Glu-tRNA(Gln). The protein is Aspartyl/glutamyl-tRNA(Asn/Gln) amidotransferase subunit B 1 (gatB1) of Clostridium acetobutylicum (strain ATCC 824 / DSM 792 / JCM 1419 / IAM 19013 / LMG 5710 / NBRC 13948 / NRRL B-527 / VKM B-1787 / 2291 / W).